The following is a 201-amino-acid chain: Oligoribonuclease (201 aa).

Residues 20–183 (LVWLDMEMTG…ADIHESIDEL (164 aa)) enclose the Exonuclease domain. The active site involves Y141.

Belongs to the oligoribonuclease family.

The protein localises to the cytoplasm. In terms of biological role, 3'-to-5' exoribonuclease specific for small oligoribonucleotides. The sequence is that of Oligoribonuclease from Burkholderia pseudomallei (strain 1106a).